The following is a 185-amino-acid chain: NADH-ubiquinone oxidoreductase chain 6 (185 aa).

The next 5 helical transmembrane spans lie at 4–24, 33–53, 54–74, 94–114, and 159–179; these read LTYYFIEITIFLAILCTIFII, ILYMIALFVIAAMYLYLIGLG, IFSLLYIMIYIGAIAVLFLFI, LPLVLISLIVLTISGLMIYSN, and AFILLVLAIVLLLGIIGPISI.

This sequence belongs to the complex I subunit 6 family. Complex I is composed of 37 different subunits.

Its subcellular location is the mitochondrion membrane. It catalyses the reaction a ubiquinone + NADH + 5 H(+)(in) = a ubiquinol + NAD(+) + 4 H(+)(out). Functionally, core subunit of the mitochondrial membrane respiratory chain NADH dehydrogenase (Complex I) that is believed to belong to the minimal assembly required for catalysis. Complex I functions in the transfer of electrons from NADH to the respiratory chain. The immediate electron acceptor for the enzyme is believed to be ubiquinone. This chain is NADH-ubiquinone oxidoreductase chain 6 (ND6), found in Yarrowia lipolytica (strain CLIB 122 / E 150) (Yeast).